A 420-amino-acid polypeptide reads, in one-letter code: MEPKPEELEKKKVVRRKFIGKRSSVKGDEASLVKSANKTRHVGRVMNQIPQEILNDKDLNEAIRLLPSNYNFEIHKTVWNIKKNGAKRVALQMPEGLLIYSLIISDILEQFCEVETVVMGDVSYGACCIDDYTARALDCDFIVHYAHSCLVPIDITDIKVLYVFVTINIDEQHLINTIKLNFDKGSQLAVFGTIQFNPTIHSIKSKLENDEEKTMYLIPPQTMPLSKGEVLGCTSARLNKEQIKAMIYIGDGRFHLESSMIHNPEIPAYRYDPYSRKFTKEYYDQKQMIEVREDAVKIASNAKKIGLILGALGRQGNPVTLNNLETKLSAKGIQVVKIILSEIFPQKLSMFNDIDAFIQVACPRLSIDWGYAFNKPLLTPYEAMVMLENDTKWNETYYPMDYYSKEGYGRGKVPDHSNVI.

[4Fe-4S] cluster-binding residues include cysteine 127, cysteine 233, and cysteine 362.

Belongs to the DPH1/DPH2 family. DPH1 subfamily. In terms of assembly, component of the 2-(3-amino-3-carboxypropyl)histidine synthase complex composed of DPH1, DPH2, DPH3 and a NADH-dependent reductase, predominantly CBR1. It depends on [4Fe-4S] cluster as a cofactor.

The protein resides in the cytoplasm. The enzyme catalyses L-histidyl-[translation elongation factor 2] + S-adenosyl-L-methionine = 2-[(3S)-amino-3-carboxypropyl]-L-histidyl-[translation elongation factor 2] + S-methyl-5'-thioadenosine + H(+). Its pathway is protein modification; peptidyl-diphthamide biosynthesis. Its function is as follows. Catalyzes the first step of diphthamide biosynthesis, a post-translational modification of histidine which occurs in elongation factor 2. DPH1 and DPH2 transfer a 3-amino-3-carboxypropyl (ACP) group from S-adenosyl-L-methionine (SAM) to a histidine residue, the reaction is assisted by a reduction system comprising DPH3 and a NADH-dependent reductase, predominantly CBR1. This chain is 2-(3-amino-3-carboxypropyl)histidine synthase subunit 1 (DPH1), found in Debaryomyces hansenii (strain ATCC 36239 / CBS 767 / BCRC 21394 / JCM 1990 / NBRC 0083 / IGC 2968) (Yeast).